Here is an 86-residue protein sequence, read N- to C-terminus: Co-chaperonin GroES (86 aa).

The protein belongs to the GroES chaperonin family. Heptamer of 7 subunits arranged in a ring. Interacts with the chaperonin GroEL.

The protein resides in the cytoplasm. Its function is as follows. Together with the chaperonin GroEL, plays an essential role in assisting protein folding. The GroEL-GroES system forms a nano-cage that allows encapsulation of the non-native substrate proteins and provides a physical environment optimized to promote and accelerate protein folding. GroES binds to the apical surface of the GroEL ring, thereby capping the opening of the GroEL channel. The polypeptide is Co-chaperonin GroES (Campylobacter concisus (strain 13826)).